A 798-amino-acid polypeptide reads, in one-letter code: Probable G-protein coupled receptor 156 (798 aa).

The Extracellular portion of the chain corresponds to 1–49; that stretch reads MEPEINCSEFCDSFPGQELDRRPLHDLCKTTITESQHSSTAASPLSPAL. Asn-6 carries N-linked (GlcNAc...) asparagine glycosylation. A helical membrane pass occupies residues 50–70; the sequence is LGIMWTFLSCGLLLVLFFLAF. At 71–86 the chain is on the cytoplasmic side; that stretch reads TIRCRKNRIVKMSSPN. A helical transmembrane segment spans residues 87–107; that stretch reads LNVVTLLGSCLTYISAYLFGI. The Extracellular portion of the chain corresponds to 108–118; sequence QDALEGSSVEA. Residues 119-139 form a helical membrane-spanning segment; the sequence is LIQTRLSLLCIGTSLVFGPIL. At 140-164 the chain is on the cytoplasmic side; that stretch reads GKSWRLYKVFTQRVPDKRVIIKDLQ. A helical transmembrane segment spans residues 165 to 185; sequence LLGLVAALVVADVILLVTWVL. Topologically, residues 186–222 are extracellular; that stretch reads TDPIQCLQMLGVSMKVTGRDVSCSLTNTHFCASRYSD. Residues 223–243 traverse the membrane as a helical segment; sequence VWIALVLGCKGLLLLYGAYLA. Topologically, residues 244–257 are cytoplasmic; that stretch reads GLTNHVSSPPVNQS. The helical transmembrane segment at 258 to 278 threads the bilayer; sequence LTIMVGVNLLLLTAGLLFVVT. Topologically, residues 279 to 288 are extracellular; that stretch reads RYLHSWPNLV. The helical transmembrane segment at 289-309 threads the bilayer; sequence FGLTSGGIFVCTTTVNCCVFI. At 310-798 the chain is on the cytoplasmic side; the sequence is PQLKQWKAFE…FKDDLKPTLV (489 aa). Positions 353 to 390 form a coiled coil; the sequence is DEKSCMERLLTEKNAVIESLQEQVSNAKEKLVKLMSAE. 3 disordered regions span residues 441 to 497, 546 to 666, and 693 to 715; these read HVQG…PMAP, SEAP…KQCE, and PAAP…PRLS. Residues 479 to 492 are compositionally biased toward basic and acidic residues; the sequence is PKAEQSEGPERGDQ. A compositionally biased stretch (polar residues) spans 559 to 572; sequence LWKSTTSRSPQKLS. The segment covering 583–594 has biased composition (basic residues); the sequence is VRRRRAAQRARS. A compositionally biased stretch (polar residues) spans 606 to 624; sequence HQANSTVSSSQSGLIVQNR. The segment covering 639-648 has biased composition (low complexity); the sequence is PRSSSVKPSP.

This sequence belongs to the G-protein coupled receptor 3 family. GABA-B receptor subfamily. In terms of tissue distribution, expressed in the outer and inner hair cells of the organ of Corti (at protein level). Expressed in the utricle and saccule within the vestibule (at protein level).

The protein localises to the cell membrane. Its subcellular location is the postsynaptic cell membrane. Orphan G-protein coupled receptor involved in the regulation of hair cell orientation in mechanosensory organs of the inner ear. It is required to trigger a 180 degree reversal in hair cell orientation, creating a virtual line of polarity reversal (LPR) across which stereociliary bundles are arranged in opposite orientations. The polypeptide is Probable G-protein coupled receptor 156 (Gpr156) (Mus musculus (Mouse)).